We begin with the raw amino-acid sequence, 353 residues long: Photosystem II protein D1 (353 aa).

T2 bears the N-acetylthreonine mark. T2 is subject to Phosphothreonine. Helical transmembrane passes span 29–46, 118–133, and 142–156; these read YIGWFGVLMIPTLLTATS, HFLLGVACYMGREWEL, and WIAVAYSAPVAAATA. Position 118 (H118) interacts with chlorophyll a. Y126 is a binding site for pheophytin a. Positions 170 and 189 each coordinate [CaMn4O5] cluster. Residues 197–218 form a helical membrane-spanning segment; sequence FHMLGVAGVFGGSLFSAMHGSL. A chlorophyll a-binding site is contributed by H198. A quinone is bound by residues H215 and 264–265; that span reads SF. H215 is a Fe cation binding site. H272 contacts Fe cation. The helical transmembrane segment at 274-288 threads the bilayer; sequence FLAAWPVVGIWFTAL. [CaMn4O5] cluster is bound by residues H332, E333, D342, and A344. Positions 345-353 are excised as a propeptide; the sequence is VVEAPSTNG.

This sequence belongs to the reaction center PufL/M/PsbA/D family. In terms of assembly, PSII is composed of 1 copy each of membrane proteins PsbA, PsbB, PsbC, PsbD, PsbE, PsbF, PsbH, PsbI, PsbJ, PsbK, PsbL, PsbM, PsbT, PsbX, PsbY, PsbZ, Psb30/Ycf12, at least 3 peripheral proteins of the oxygen-evolving complex and a large number of cofactors. It forms dimeric complexes. It depends on The D1/D2 heterodimer binds P680, chlorophylls that are the primary electron donor of PSII, and subsequent electron acceptors. It shares a non-heme iron and each subunit binds pheophytin, quinone, additional chlorophylls, carotenoids and lipids. D1 provides most of the ligands for the Mn4-Ca-O5 cluster of the oxygen-evolving complex (OEC). There is also a Cl(-1) ion associated with D1 and D2, which is required for oxygen evolution. The PSII complex binds additional chlorophylls, carotenoids and specific lipids. as a cofactor. Post-translationally, tyr-161 forms a radical intermediate that is referred to as redox-active TyrZ, YZ or Y-Z. C-terminally processed by CTPA; processing is essential to allow assembly of the oxygen-evolving complex and thus photosynthetic growth.

The protein resides in the plastid. The protein localises to the chloroplast thylakoid membrane. The catalysed reaction is 2 a plastoquinone + 4 hnu + 2 H2O = 2 a plastoquinol + O2. Functionally, photosystem II (PSII) is a light-driven water:plastoquinone oxidoreductase that uses light energy to abstract electrons from H(2)O, generating O(2) and a proton gradient subsequently used for ATP formation. It consists of a core antenna complex that captures photons, and an electron transfer chain that converts photonic excitation into a charge separation. The D1/D2 (PsbA/PsbD) reaction center heterodimer binds P680, the primary electron donor of PSII as well as several subsequent electron acceptors. In Aethionema grandiflorum (Persian stone-cress), this protein is Photosystem II protein D1.